The following is a 196-amino-acid chain: Mpv17-like protein (196 aa).

Over 1–16 (MVSWWQALTRAAGRYP) the chain is Cytoplasmic. Residues 16-55 (PWPANVLLYAGFFSGGDALQQVLRGGPADWQHTRHVATVA) are targeting to peroxisomes. A helical transmembrane segment spans residues 17-34 (WPANVLLYAGFFSGGDAL). Over 35-50 (QQVLRGGPADWQHTRH) the chain is Lumenal. The helical transmembrane segment at 51-67 (VATVAVAFHANLNYVWL) threads the bilayer. At 68–90 (NLLERALPGRAPRTILAKVLCDQ) the chain is on the cytoplasmic side. Residues 91–108 (ALGGPVYVSTFYAGMSIL) traverse the membrane as a helical segment. Topologically, residues 109–150 (QGKDDIFLDMRQKFWNTYKSGLMYWPFVQLINFSLIPIRWRT) are lumenal. Residues 151–167 (AYTGLCGFLWATFLCFS) form a helical membrane-spanning segment. The Cytoplasmic segment spans residues 168-196 (QQEGDGTFKSAFTFRRIKVTNEVEKPSEK).

It belongs to the peroxisomal membrane protein PXMP2/4 family.

The protein resides in the peroxisome membrane. Functionally, participates in reactive oxygen species metabolism by up- or down-regulation of the genes of antioxidant enzymes. Protective against the mitochondrial apoptotic cascade. The sequence is that of Mpv17-like protein (MPV17L) from Bos taurus (Bovine).